A 130-amino-acid polypeptide reads, in one-letter code: Large ribosomal subunit protein bL20c (130 aa).

It belongs to the bacterial ribosomal protein bL20 family.

The protein resides in the plastid. It localises to the chloroplast. In terms of biological role, binds directly to 23S ribosomal RNA and is necessary for the in vitro assembly process of the 50S ribosomal subunit. It is not involved in the protein synthesizing functions of that subunit. In Fagopyrum esculentum subsp. ancestrale (Wild buckwheat), this protein is Large ribosomal subunit protein bL20c.